The following is a 161-amino-acid chain: Allophycocyanin subunit alpha-B (161 aa).

At Asn-71 the chain carries N4-methylasparagine. Cys-81 contacts (2R,3E)-phycocyanobilin.

The protein belongs to the phycobiliprotein family. Heterodimer of an alpha-B and a beta chain forming AP-B. Post-translationally, contains one covalently linked bilin chromophore. The chromophore is added by phycocyanobilin lyase CpcUS.

Its subcellular location is the cellular thylakoid membrane. Functionally, a variant alpha-allophycocyanin (AP) which forms a complex with beta-AP with maximum absorption at approximately 670 nanometers. It is an important phycobilisome terminal emitter involved in energy transfer to photosystem I. In Picosynechococcus sp. (strain ATCC 27264 / PCC 7002 / PR-6) (Agmenellum quadruplicatum), this protein is Allophycocyanin subunit alpha-B (apcD).